The sequence spans 408 residues: Putative transporter AmpG 2 (408 aa).

12 helical membrane passes run 10–30 (YISNIFFILIISFPGGLIYLL), 49–69 (IGLFSLVNFIHIFKFLWGPLL), 84–104 (YCLIIALVSCICCVYILTNFN), 109–129 (FIPFALCLVAVAFFSSIYDML), 154–174 (FRIGILIAGSGALYLSTIISW), 177–197 (VYRSMAILCIPSLLLIIIYPL), 224–244 (WLIIVSFMLLYRLQDNFLSIM), 261–281 (LGYKAFGMCAAILGGFIGGFL), 294–311 (ALIYHALSSLSFLFLYFY), 315–337 (ITSLYIAVFFQEFTKGLTMSPFF), 353–373 (IALITSIAYISTILFGSISGY), and 378–398 (LGWTYFFLVAGFCFIPAYILI).

This sequence belongs to the major facilitator superfamily.

The protein resides in the cell inner membrane. The sequence is that of Putative transporter AmpG 2 (ampG2) from Rickettsia felis (strain ATCC VR-1525 / URRWXCal2) (Rickettsia azadi).